The primary structure comprises 346 residues: Sensor histidine kinase GraS (346 aa).

2 helical membrane-spanning segments follow: residues 15-35 (INWI…AYID) and 43-63 (VFYI…FTFV). One can recognise a Histidine kinase domain in the interval 126-332 (EFVHDIKTPV…TFYFIFPQQN (207 aa)). Phosphohistidine; by autocatalysis is present on histidine 129.

Autophosphorylated.

It localises to the cell membrane. The catalysed reaction is ATP + protein L-histidine = ADP + protein N-phospho-L-histidine.. Its function is as follows. Member of the two-component regulatory system GraR/GraS involved in resistance against cationic antimicrobial peptides (CAMPs). GraS probably functions as a sensor protein kinase which is autophosphorylated at a histidine residue and transfers its phosphate group to GraR. This is Sensor histidine kinase GraS (graS) from Staphylococcus epidermidis (strain ATCC 35984 / DSM 28319 / BCRC 17069 / CCUG 31568 / BM 3577 / RP62A).